Here is a 228-residue protein sequence, read N- to C-terminus: Octanoyltransferase (228 aa).

In terms of domain architecture, BPL/LPL catalytic spans 30 to 213 (NKVEDIMLLL…YFSRVFDFEP (184 aa)). Substrate contacts are provided by residues 75–82 (RGGDVTYH), 143–145 (AIG), and 156–158 (GFA). Catalysis depends on C174, which acts as the Acyl-thioester intermediate.

Belongs to the LipB family.

Its subcellular location is the cytoplasm. The catalysed reaction is octanoyl-[ACP] + L-lysyl-[protein] = N(6)-octanoyl-L-lysyl-[protein] + holo-[ACP] + H(+). It functions in the pathway protein modification; protein lipoylation via endogenous pathway; protein N(6)-(lipoyl)lysine from octanoyl-[acyl-carrier-protein]: step 1/2. Functionally, catalyzes the transfer of endogenously produced octanoic acid from octanoyl-acyl-carrier-protein onto the lipoyl domains of lipoate-dependent enzymes. Lipoyl-ACP can also act as a substrate although octanoyl-ACP is likely to be the physiological substrate. The protein is Octanoyltransferase of Desulforamulus reducens (strain ATCC BAA-1160 / DSM 100696 / MI-1) (Desulfotomaculum reducens).